The following is a 383-amino-acid chain: Putative F-box/kelch-repeat protein At1g62270 (383 aa).

The region spanning 6 to 51 (TSSFSSLPWDLVEDILARVPATSLKRLRSTCKQWNFLFNDQIFTKM) is the F-box domain. Kelch repeat units lie at residues 110–158 (KVFH…YGNY), 160–211 (SCYN…LRGN), and 349–383 (TVYI…LVQI).

The sequence is that of Putative F-box/kelch-repeat protein At1g62270 from Arabidopsis thaliana (Mouse-ear cress).